Reading from the N-terminus, the 498-residue chain is ATP synthase subunit beta, chloroplastic (498 aa).

172–179 is an ATP binding site; the sequence is GGAGVGKT.

This sequence belongs to the ATPase alpha/beta chains family. In terms of assembly, F-type ATPases have 2 components, CF(1) - the catalytic core - and CF(0) - the membrane proton channel. CF(1) has five subunits: alpha(3), beta(3), gamma(1), delta(1), epsilon(1). CF(0) has four main subunits: a(1), b(1), b'(1) and c(9-12).

It is found in the plastid. The protein localises to the chloroplast thylakoid membrane. The enzyme catalyses ATP + H2O + 4 H(+)(in) = ADP + phosphate + 5 H(+)(out). In terms of biological role, produces ATP from ADP in the presence of a proton gradient across the membrane. The catalytic sites are hosted primarily by the beta subunits. This chain is ATP synthase subunit beta, chloroplastic, found in Phoenix dactylifera (Date palm).